We begin with the raw amino-acid sequence, 279 residues long: Non-structural maintenance of chromosomes element 3 homolog (279 aa).

Residues 1–52 are disordered; it reads MLQKPRGRGRPSTQADPERDWGGAGEEGPSTSRAAGGSSQGSRASLSAPTVG. Low complexity predominate over residues 30 to 48; sequence STSRAAGGSSQGSRASLSA. Ser38 carries the post-translational modification Phosphoserine. Residues 52 to 279 form an interaction with NSMCE1 region; sequence GPRTQKQLEL…ATASAPATSS (228 aa). The 201-residue stretch at 59–259 folds into the MAGE domain; the sequence is LELKVAELVQ…KDWPTQYCEA (201 aa).

In terms of assembly, component of the SMC5-SMC6 complex which consists at least of SMC5, SMC6, NSMCE2, NSMCE1, NSMCE4A or EID3 and NSMCE3. NSMCE1, NSMCE4A or EID3 and NSMCE3 probably form a subcomplex that bridges the head domains of the SMC5:SMC6 heterodimer. Interacts with PJA1. Interacts with E2F1 (via C-terminus). Interacts with NGFR (via C-terminus). Interacts with NSMCE1. Interacts with NSMCE4. Interacts with SMC6. Interacts with EID3. In terms of tissue distribution, ubiquitous.

The protein resides in the cytoplasm. It localises to the nucleus. The protein localises to the chromosome. It is found in the telomere. Functionally, component of the SMC5-SMC6 complex, a complex involved in repair of DNA double-strand breaks by homologous recombination. The complex may promote sister chromatid homologous recombination by recruiting the SMC1-SMC3 cohesin complex to double-strand breaks. The complex is required for telomere maintenance via recombination in ALT (alternative lengthening of telomeres) cell lines and mediates sumoylation of shelterin complex (telosome) components which is proposed to lead to shelterin complex disassembly in ALT-associated PML bodies (APBs). In vitro enhances ubiquitin ligase activity of NSMCE1. Proposed to act through recruitment and/or stabilization of the Ubl-conjugating enzyme (E2) at the E3:substrate complex. May be a growth suppressor that facilitates the entry of the cell into cell cycle arrest. This Mus musculus (Mouse) protein is Non-structural maintenance of chromosomes element 3 homolog (Nsmce3).